We begin with the raw amino-acid sequence, 589 residues long: Sphingosine-1-phosphate lyase (589 aa).

The Lumenal portion of the chain corresponds to 1–58; it reads MSGVSNKTVSINGWYGMPIHLLREEGDFAQFMILTINELKIAIHGYLRNTPWYNMLKD. A glycan (N-linked (GlcNAc...) asparagine) is linked at Asn-6. The chain crosses the membrane as a helical span at residues 59-76; sequence YLFVIFCYKLISNFFYLL. Residues 77-589 lie on the Cytoplasmic side of the membrane; that stretch reads KVYGPVRLAV…LGPGEDTATK (513 aa). Lys-380 carries the N6-(pyridoxal phosphate)lysine modification.

Belongs to the group II decarboxylase family. Sphingosine-1-phosphate lyase subfamily. Homodimer. Pyridoxal 5'-phosphate is required as a cofactor. Glycosylated.

The protein localises to the endoplasmic reticulum membrane. The enzyme catalyses sphinganine 1-phosphate = hexadecanal + phosphoethanolamine. It carries out the reaction (4R)-hydroxysphinganine 1-phosphate = (2R)-hydroxyhexadecanal + phosphoethanolamine. The protein operates within lipid metabolism; sphingolipid metabolism. Its function is as follows. Sphingosine-1-phosphate lyase that cleaves phosphorylated sphingoid bases (PSBs), such as sphingosine-1-phosphate, into fatty aldehydes and phosphoethanolamine. Prefers C-16 dihydrosphingosine-l-phosphate (DHS-P) as a substrate. Regulates intracellular levels of sphingolipid long-chain base phosphates (LCBPs). Plays a role in the regulation of global responses to nutrient deprivation in yeast. This chain is Sphingosine-1-phosphate lyase, found in Saccharomyces cerevisiae (strain ATCC 204508 / S288c) (Baker's yeast).